The sequence spans 565 residues: Tyrosine-protein phosphatase non-receptor type 5 (565 aa).

A compositionally biased stretch (basic and acidic residues) spans 1–16 (MNYEGARSERENHAAD). Positions 1–80 (MNYEGARSER…KPPPRGAGSH (80 aa)) are disordered. A compositionally biased stretch (pro residues) spans 56 to 75 (MPPPPPPSPPSDPAQKPPPR). 2 helical membrane passes run 88 to 108 (LCLFAASQFLLACGVLWFSGY) and 146 to 166 (LLLVFLSVGLVLVTTLVWHLL). The tract at residues 169–189 (PPEPPTPLPPEDRRQSVSRQP) is disordered. Ser-245 carries the phosphoserine; by PKA modification. Thr-255 bears the Phosphothreonine; by MAPK mark. The residue at position 268 (Ser-268) is a Phosphoserine; by MAPK. In terms of domain architecture, Tyrosine-protein phosphatase spans 300–555 (LQAEFFEIPM…QFVHHVMSLY (256 aa)). Substrate is bound by residues Asp-461, 496–502 (CSAGIGR), and Gln-540. Catalysis depends on Cys-496, which acts as the Phosphocysteine intermediate.

It belongs to the protein-tyrosine phosphatase family. Non-receptor class subfamily. Phosphorylation at Ser-245 by PKA deactivates PTPN5. Phosphorylation at Thr-255 and Ser-268 by MAPKs stabilizes the phosphatase, dephosphorylation of these sites results in ubiquitin-mediated degradation of the active phosphatase.

It is found in the endoplasmic reticulum membrane. It carries out the reaction O-phospho-L-tyrosyl-[protein] + H2O = L-tyrosyl-[protein] + phosphate. Functionally, may regulate the activity of several effector molecules involved in synaptic plasticity and neuronal cell survival, including MAPKs, Src family kinases and NMDA receptors. The protein is Tyrosine-protein phosphatase non-receptor type 5 (PTPN5) of Homo sapiens (Human).